The chain runs to 269 residues: Formamidopyrimidine-DNA glycosylase (269 aa).

Proline 2 functions as the Schiff-base intermediate with DNA in the catalytic mechanism. The active-site Proton donor is the glutamate 3. Lysine 57 acts as the Proton donor; for beta-elimination activity in catalysis. DNA-binding residues include histidine 90, arginine 109, and lysine 150. The FPG-type zinc finger occupies 235 to 269 (QVYGRGGEPCRVCGTPIQMAKHGQRSTFFCPACQH). The Proton donor; for delta-elimination activity role is filled by arginine 259.

Belongs to the FPG family. Monomer. Zn(2+) serves as cofactor.

It catalyses the reaction Hydrolysis of DNA containing ring-opened 7-methylguanine residues, releasing 2,6-diamino-4-hydroxy-5-(N-methyl)formamidopyrimidine.. It carries out the reaction 2'-deoxyribonucleotide-(2'-deoxyribose 5'-phosphate)-2'-deoxyribonucleotide-DNA = a 3'-end 2'-deoxyribonucleotide-(2,3-dehydro-2,3-deoxyribose 5'-phosphate)-DNA + a 5'-end 5'-phospho-2'-deoxyribonucleoside-DNA + H(+). Its function is as follows. Involved in base excision repair of DNA damaged by oxidation or by mutagenic agents. Acts as a DNA glycosylase that recognizes and removes damaged bases. Has a preference for oxidized purines, such as 7,8-dihydro-8-oxoguanine (8-oxoG). Has AP (apurinic/apyrimidinic) lyase activity and introduces nicks in the DNA strand. Cleaves the DNA backbone by beta-delta elimination to generate a single-strand break at the site of the removed base with both 3'- and 5'-phosphates. The polypeptide is Formamidopyrimidine-DNA glycosylase (Sodalis glossinidius (strain morsitans)).